The sequence spans 305 residues: Dermonecrotic toxin LiSicTox-betaID1 (305 aa).

The first 18 residues, 1 to 18, serve as a signal peptide directing secretion; it reads MQLFIILCLAGSAVQLEG. Positions 19-26 are excised as a propeptide; sequence TELDGVER. H38 is an active-site residue. Residues E58 and D60 each coordinate Mg(2+). The active-site Nucleophile is H74. 2 disulfides stabilise this stretch: C78–C84 and C80–C223. D118 contributes to the Mg(2+) binding site.

Belongs to the arthropod phospholipase D family. Class II subfamily. Class IIb sub-subfamily. Mg(2+) serves as cofactor. Expressed by the venom gland.

The protein resides in the secreted. The catalysed reaction is an N-(acyl)-sphingosylphosphocholine = an N-(acyl)-sphingosyl-1,3-cyclic phosphate + choline. The enzyme catalyses an N-(acyl)-sphingosylphosphoethanolamine = an N-(acyl)-sphingosyl-1,3-cyclic phosphate + ethanolamine. It catalyses the reaction a 1-acyl-sn-glycero-3-phosphocholine = a 1-acyl-sn-glycero-2,3-cyclic phosphate + choline. It carries out the reaction a 1-acyl-sn-glycero-3-phosphoethanolamine = a 1-acyl-sn-glycero-2,3-cyclic phosphate + ethanolamine. Its function is as follows. Dermonecrotic toxins cleave the phosphodiester linkage between the phosphate and headgroup of certain phospholipids (sphingolipid and lysolipid substrates), forming an alcohol (often choline) and a cyclic phosphate. This toxin acts on sphingomyelin (SM) with low activity. It may also act on ceramide phosphoethanolamine (CPE), lysophosphatidylcholine (LPC) and lysophosphatidylethanolamine (LPE), but not on lysophosphatidylserine (LPS), and lysophosphatidylglycerol (LPG). It acts by transphosphatidylation, releasing exclusively cyclic phosphate products as second products. Has no or weak activities in inducing dermonecrosis, hemolysis, inflammatory response, platelet aggregation and increase in vessel permeability. In vivo, shows no lethality when injected at higher dose into mice. This is Dermonecrotic toxin LiSicTox-betaID1 from Loxosceles intermedia (Brown spider).